Reading from the N-terminus, the 528-residue chain is Dihydromonacolin L monooxygenase LovA (528 aa).

The Cytoplasmic portion of the chain corresponds to methionine 1–histidine 23. A helical; Signal-anchor for type II membrane protein membrane pass occupies residues glycine 24–leucine 44. Topologically, residues cysteine 45–leucine 528 are lumenal. An N-linked (GlcNAc...) asparagine glycan is attached at asparagine 399. Cysteine 465 serves as a coordination point for heme.

This sequence belongs to the cytochrome P450 family. Heme serves as cofactor.

The protein localises to the membrane. The protein resides in the endoplasmic reticulum membrane. It carries out the reaction dihydromonacolin L carboxylate + reduced [NADPH--hemoprotein reductase] + O2 = monacolin L carboxylate + oxidized [NADPH--hemoprotein reductase] + 2 H2O + H(+). The enzyme catalyses monacolin L carboxylate + reduced [NADPH--hemoprotein reductase] + O2 = monacolin J carboxylate + oxidized [NADPH--hemoprotein reductase] + H2O + H(+). It participates in polyketide biosynthesis; lovastatin biosynthesis. Functionally, dihydromonacolin L monooxygenase; part of the gene cluster that mediates the biosynthesis of lovastatin (also known as mevinolin, mevacor or monacolin K), a hypolipidemic inhibitor of (3S)-hydroxymethylglutaryl-coenzyme A (HMG-CoA) reductase (HMGR). The first step in the biosynthesis of lovastatin is the production of dihydromonacolin L acid by the lovastatin nonaketide synthase lovB and the trans-acting enoyl reductase lovC via condensation of one acetyl-CoA unit and 8 malonyl-CoA units. Dihydromonacolin L acid is released from lovB by the thioesterase lovG. Next, dihydromonacolin L acid is oxidized by the dihydromonacolin L monooxygenase lovA twice to form monacolin J acid. The 2-methylbutyrate moiety of lovastatin is synthesized by the lovastatin diketide synthase lovF via condensation of one acetyl-CoA unit and one malonyl-CoA unit. Finally, the covalent attachment of this moiety to monacolin J acid is catalyzed by the transesterase lovD to yield lovastatin. LovD has broad substrate specificity and can also convert monacolin J to simvastatin using alpha-dimethylbutanoyl-S-methyl-3-mercaptopropionate (DMB-S-MMP) as the thioester acyl donor, and can also catalyze the reverse reaction and function as hydrolase in vitro. LovD has much higher activity with LovF-bound 2-methylbutanoate than with free diketide substrates. The sequence is that of Dihydromonacolin L monooxygenase LovA from Aspergillus terreus (strain NIH 2624 / FGSC A1156).